The following is a 410-amino-acid chain: Dipeptidase 1 (410 aa).

A signal peptide spans 1-16 (MWTGWWLWPLVAVCTA). His-36 and Asp-38 together coordinate Zn(2+). Residues Asn-57 and Asn-62 are each glycosylated (N-linked (GlcNAc...) asparagine). The cysteines at positions 87 and 170 are disulfide-linked. Zn(2+) is bound at residue Glu-141. His-168 contributes to the substrate binding site. 2 residues coordinate Zn(2+): His-214 and His-235. Cys-242 and Cys-274 form a disulfide bridge. A substrate-binding site is contributed by Arg-246. The N-linked (GlcNAc...) asparagine glycan is linked to Asn-279. Asp-304 is a binding site for substrate. The GPI-anchor amidated serine moiety is linked to residue Ser-384. Residues 385–410 (GAPSLHLQPGTLLASLVTLLLSLCLL) constitute a propeptide, removed in mature form.

This sequence belongs to the metallo-dependent hydrolases superfamily. Peptidase M19 family. In terms of assembly, homodimer; disulfide-linked. Requires Zn(2+) as cofactor.

It is found in the apical cell membrane. The enzyme catalyses an L-aminoacyl-L-amino acid + H2O = 2 an L-alpha-amino acid. The catalysed reaction is leukotriene D4 + H2O = leukotriene E4 + glycine. It carries out the reaction L-cystine-bis-glycine + 2 H2O = L-cystine + 2 glycine. It catalyses the reaction a beta-lactam + H2O = a substituted beta-amino acid. The enzyme catalyses glycyldehydrophenylalanine + H2O = 2,3-didehydrophenylalanine + glycine. Inhibited by L-penicillamine. Inhibited by cilastatin. Its function is as follows. Hydrolyzes a wide range of dipeptides including the conversion of leukotriene D4 to leukotriene E4. Hydrolyzes cystinyl-bis-glycine (cys-bis-gly) formed during glutathione degradation. Also possesses beta lactamase activity and hydrolytically inactivates beta-lactam antibiotics. In terms of biological role, independently of its dipeptidase activity, acts as an adhesion receptor for neutrophil recruitment from bloodstream into inflamed lungs and liver. The polypeptide is Dipeptidase 1 (DPEP1) (Bos taurus (Bovine)).